An 854-amino-acid chain; its full sequence is A-kinase anchor protein 4 (854 aa).

Positions 1–188 (MMAYSDTTMM…MTAAKNTNNN (188 aa)) are excised as a propeptide. Phosphoserine is present on residues S96, S130, S190, S213, S226, and S272. The segment at 184–207 (NTNNNQSPSAPPAKPPSTQRAVIS) is disordered. Positions 219-232 (FYVNRLSSLVIQMA) are PKA-RI and PKA-RII subunit binding domain. Residues 287-323 (RGTGEESREGGQKSFLYSELSNKSKSGDKQMSQRESK) are disordered. The span at 288-297 (GTGEESREGG) shows a compositional bias: basic and acidic residues. S300 is modified (phosphoserine). The residue at position 303 (Y303) is a Phosphotyrosine. Phosphoserine occurs at positions 304 and 307. Positions 311–323 (KSGDKQMSQRESK) are enriched in basic and acidic residues. The PKA-RI-alpha subunit binding domain stretch occupies residues 336 to 345 (YANQVASDMM). Phosphoserine occurs at positions 342, 432, 443, 445, 447, 450, 464, and 492. The residue at position 506 (T506) is a Phosphothreonine. Phosphoserine is present on residues S536, S581, S627, and S703.

This sequence belongs to the AKAP110 family. In terms of assembly, interacts with PRKAR1A and PRKAR2A. Interacts with ENO4. Interacts with QRICH2. Phosphorylated by STK33 during sperm flagella assembly. As to expression, testis specific; only expressed in round spermatids.

Its subcellular location is the cell projection. It is found in the cilium. The protein localises to the flagellum. Functionally, major structural component of sperm fibrous sheath. Plays a role in sperm motility. This is A-kinase anchor protein 4 from Homo sapiens (Human).